Here is a 130-residue protein sequence, read N- to C-terminus: Modulator protein MzrA (130 aa).

Residues 1-15 (MIAAFIKRHAPQRRL) lie on the Cytoplasmic side of the membrane. The helical transmembrane segment at 16 to 36 (SLWLALPVVALLALVMMPALF) threads the bilayer. The Periplasmic portion of the chain corresponds to 37–130 (RHDSALQIRA…RISFKPQSIG (94 aa)).

Belongs to the MzrA family. In terms of assembly, interacts with EnvZ.

It localises to the cell inner membrane. Modulates the activity of the EnvZ/OmpR two-component regulatory system, probably by directly modulating EnvZ enzymatic activity and increasing stability of phosphorylated OmpR. This chain is Modulator protein MzrA, found in Erwinia tasmaniensis (strain DSM 17950 / CFBP 7177 / CIP 109463 / NCPPB 4357 / Et1/99).